A 274-amino-acid polypeptide reads, in one-letter code: Cytochrome b-c1 complex subunit Rieske, mitochondrial (274 aa).

Over 79–103 (SHTDIKVPDFSDYRRSEVLDKTKSS) the chain is Mitochondrial matrix. The chain crosses the membrane as a helical span at residues 104-140 (RESSDARKGFSYLVTAATAVGVTYAAKSIVTQFVSSM). At 141–274 (SASADVLAMS…FTGDDMVIVG (134 aa)) the chain is on the mitochondrial intermembrane side. The Rieske domain occupies 187–272 (EAAVELSQLR…YEFTGDDMVI (86 aa)). Residues C217, H219, C236, H239, and S241 each coordinate [2Fe-2S] cluster. C222 and C238 are disulfide-bonded.

The protein belongs to the Rieske iron-sulfur protein family. Component of the ubiquinol-cytochrome c oxidoreductase (cytochrome b-c1 complex, complex III, CIII), a multisubunit enzyme composed of 11 subunits. The complex is composed of 3 respiratory subunits cytochrome b, cytochrome c1 and Rieske protein UQCRFS1, 2 core protein subunits UQCRC1/QCR1 and UQCRC2/QCR2, and 6 low-molecular weight protein subunits UQCRH/QCR6, UQCRB/QCR7, UQCRQ/QCR8, UQCR10/QCR9, UQCR11/QCR10 and subunit 9, the cleavage product of Rieske protein UQCRFS1. The complex exists as an obligatory dimer and forms supercomplexes (SCs) in the inner mitochondrial membrane with NADH-ubiquinone oxidoreductase (complex I, CI) and cytochrome c oxidase (complex IV, CIV), resulting in different assemblies (supercomplex SCI(1)III(2)IV(1) and megacomplex MCI(2)III(2)IV(2)). Incorporation of the Rieske protein UQCRFS1 is the penultimate step in complex III assembly. Interacts with TTC19, which is involved in the clearance of UQCRFS1 fragments. As to quaternary structure, component of the ubiquinol-cytochrome c oxidoreductase (cytochrome b-c1 complex, complex III, CIII). Subunit 9 corresponds to the mitochondrial targeting sequence (MTS) of Rieske protein UQCRFS1. It is retained after processing and incorporated inside complex III, where it remains bound to the complex and localizes between the 2 core subunits UQCRC1/QCR1 and UQCRC2/QCR2. [2Fe-2S] cluster serves as cofactor. Post-translationally, proteolytic processing is necessary for the correct insertion of UQCRFS1 in the complex III dimer. Several fragments are generated during UQCRFS1 insertion, most probably due to the endogenous matrix-processing peptidase (MPP) activity of the 2 core protein subunits UQCRC1/QCR1 and UQCRC2/QCR2, which are homologous to the 2 mitochondrial-processing peptidase (MPP) subunits beta-MPP and alpha-MPP respectively. The action of the protease is also necessary for the clearance of the UQCRFS1 fragments.

Its subcellular location is the mitochondrion inner membrane. It carries out the reaction a quinol + 2 Fe(III)-[cytochrome c](out) = a quinone + 2 Fe(II)-[cytochrome c](out) + 2 H(+)(out). In terms of biological role, component of the ubiquinol-cytochrome c oxidoreductase, a multisubunit transmembrane complex that is part of the mitochondrial electron transport chain which drives oxidative phosphorylation. The respiratory chain contains 3 multisubunit complexes succinate dehydrogenase (complex II, CII), ubiquinol-cytochrome c oxidoreductase (cytochrome b-c1 complex, complex III, CIII) and cytochrome c oxidase (complex IV, CIV), that cooperate to transfer electrons derived from NADH and succinate to molecular oxygen, creating an electrochemical gradient over the inner membrane that drives transmembrane transport and the ATP synthase. The cytochrome b-c1 complex catalyzes electron transfer from ubiquinol to cytochrome c, linking this redox reaction to translocation of protons across the mitochondrial inner membrane, with protons being carried across the membrane as hydrogens on the quinol. In the process called Q cycle, 2 protons are consumed from the matrix, 4 protons are released into the intermembrane space and 2 electrons are passed to cytochrome c. The Rieske protein is a catalytic core subunit containing a [2Fe-2S] iron-sulfur cluster. It cycles between 2 conformational states during catalysis to transfer electrons from the quinol bound in the Q(0) site in cytochrome b to cytochrome c1. Incorporation of UQCRFS1 is the penultimate step in complex III assembly. Its function is as follows. Component of the ubiquinol-cytochrome c oxidoreductase (cytochrome b-c1 complex, complex III, CIII). UQCRFS1 undergoes proteolytic processing once it is incorporated in the complex III dimer. One of the fragments, called subunit 9, corresponds to its mitochondrial targeting sequence (MTS). The proteolytic processing is necessary for the correct insertion of UQCRFS1 in the complex III dimer, but the persistence of UQCRFS1-derived fragments may prevent newly imported UQCRFS1 to be processed and assembled into complex III and is detrimental for the complex III structure and function. This Lagothrix lagotricha (Brown woolly monkey) protein is Cytochrome b-c1 complex subunit Rieske, mitochondrial (UQCRFS1).